We begin with the raw amino-acid sequence, 374 residues long: UDP-N-acetylglucosamine--N-acetylmuramyl-(pentapeptide) pyrophosphoryl-undecaprenol N-acetylglucosamine transferase (374 aa).

Residues 13 to 15, N124, R165, S193, and Q294 contribute to the UDP-N-acetyl-alpha-D-glucosamine site; that span reads TGG.

Belongs to the glycosyltransferase 28 family. MurG subfamily.

Its subcellular location is the cell inner membrane. The catalysed reaction is di-trans,octa-cis-undecaprenyl diphospho-N-acetyl-alpha-D-muramoyl-L-alanyl-D-glutamyl-meso-2,6-diaminopimeloyl-D-alanyl-D-alanine + UDP-N-acetyl-alpha-D-glucosamine = di-trans,octa-cis-undecaprenyl diphospho-[N-acetyl-alpha-D-glucosaminyl-(1-&gt;4)]-N-acetyl-alpha-D-muramoyl-L-alanyl-D-glutamyl-meso-2,6-diaminopimeloyl-D-alanyl-D-alanine + UDP + H(+). Its pathway is cell wall biogenesis; peptidoglycan biosynthesis. In terms of biological role, cell wall formation. Catalyzes the transfer of a GlcNAc subunit on undecaprenyl-pyrophosphoryl-MurNAc-pentapeptide (lipid intermediate I) to form undecaprenyl-pyrophosphoryl-MurNAc-(pentapeptide)GlcNAc (lipid intermediate II). The sequence is that of UDP-N-acetylglucosamine--N-acetylmuramyl-(pentapeptide) pyrophosphoryl-undecaprenol N-acetylglucosamine transferase from Rhizobium rhizogenes (strain K84 / ATCC BAA-868) (Agrobacterium radiobacter).